The chain runs to 216 residues: ATP phosphoribosyltransferase (216 aa).

The protein belongs to the ATP phosphoribosyltransferase family. Short subfamily. In terms of assembly, heteromultimer composed of HisG and HisZ subunits.

Its subcellular location is the cytoplasm. The enzyme catalyses 1-(5-phospho-beta-D-ribosyl)-ATP + diphosphate = 5-phospho-alpha-D-ribose 1-diphosphate + ATP. It functions in the pathway amino-acid biosynthesis; L-histidine biosynthesis; L-histidine from 5-phospho-alpha-D-ribose 1-diphosphate: step 1/9. Functionally, catalyzes the condensation of ATP and 5-phosphoribose 1-diphosphate to form N'-(5'-phosphoribosyl)-ATP (PR-ATP). Has a crucial role in the pathway because the rate of histidine biosynthesis seems to be controlled primarily by regulation of HisG enzymatic activity. This chain is ATP phosphoribosyltransferase, found in Thiobacillus denitrificans (strain ATCC 25259 / T1).